Reading from the N-terminus, the 467-residue chain is Acyl-lipid (8-3)-desaturase B (467 aa).

In terms of domain architecture, Cytochrome b5 heme-binding spans 12-89 (LKLYTWDEVS…IKQYEIGYIS (78 aa)). Residues His47 and His70 each contribute to the heme site. A run of 2 helical transmembrane segments spans residues 123-143 (VSVG…VTYY) and 152-172 (FWLN…FGLH). Positions 175–179 (HDACH) match the Histidine box-1 motif. The chain crosses the membrane as a helical span at residues 187–207 (MTWKILGATFDLFAGASFYAW). Residues 211–216 (HVIGHH) carry the Histidine box-2 motif. The next 2 helical transmembrane spans lie at 293-313 (AIFI…PLIY) and 317-337 (FSHL…YLAI). The Histidine box-3 signature appears at 400–404 (QVIHH).

The protein belongs to the fatty acid desaturase type 1 family. Fe(2+) is required as a cofactor.

The protein resides in the membrane. It catalyses the reaction an (8Z,11Z,14Z)-icosatrienoyl-containing glycerolipid + 2 Fe(II)-[cytochrome b5] + O2 + 2 H(+) = (5Z,8Z,11Z,14Z)-eicosatetraenoyl-containing glycerolipid + 2 Fe(III)-[cytochrome b5] + 2 H2O. The enzyme catalyses an (8Z,11Z,14Z,17Z)-eicosatetraenoyl-containing glycerolipid + 2 Fe(II)-[cytochrome b5] + O2 + 2 H(+) = a (5Z,8Z,11Z,14Z,17Z)-eicosapentaenoyl-containing glycerolipid + 2 Fe(III)-[cytochrome b5] + 2 H2O. In terms of biological role, fatty acid desaturase that introduces a cis double bond at the 5-position in 18-carbon polyunsaturated fatty acids. The sequence is that of Acyl-lipid (8-3)-desaturase B (fadB) from Dictyostelium discoideum (Social amoeba).